The following is a 118-amino-acid chain: Sarafotoxin-i1 (118 aa).

Positions 1–23 (MALLPRLAAGGLLLLLALAALDG) are cleaved as a signal peptide. Positions 24-84 (KPAPPKLLQK…LSPLRKPQPL (61 aa)) are excised as a propeptide. Intrachain disulfides connect Cys85-Cys99 and Cys87-Cys95. Positions 112–118 (PSPIQSS) are excised as a propeptide.

It belongs to the endothelin/sarafotoxin family. Different length molecules ranging from 15 (85-99) to 30 amino acids (85-114) have been found in the venom. In terms of tissue distribution, expressed by the venom gland.

The protein resides in the secreted. Its function is as follows. Vasoconstrictor activity. These toxins cause cardiac arrest probably as a result of coronary vasospasm. Sarafotoxin-i3: vasoconstrictor activity. Causes cardiac arrest probably as a result of coronary vasospasm. Displays low agonistic activities towards endothelin-2 receptor (EDNRB) (displays affinity in the micromolar range). In Atractaspis irregularis (Variable burrowing asp), this protein is Sarafotoxin-i1.